Consider the following 819-residue polypeptide: ATP-dependent DNA helicase PIF4 (819 aa).

A mitochondrion-targeting transit peptide spans 1 to 84; sequence MLLNSTRTLL…RQASSAGHND (84 aa). A disordered region spans residues 76–101; it reads QASSAGHNDLGLQEKEKSSGDESAFS. ATP is bound at residue 126 to 133; sequence GGAGVGKS. Residues 734-754 mediate DNA binding; that stretch reads HIIYVAASRVKKFSQLRMINV.

This sequence belongs to the helicase family. PIF1 subfamily. As to quaternary structure, monomer. Mg(2+) serves as cofactor.

It is found in the mitochondrion matrix. The protein resides in the kinetoplast. It carries out the reaction Couples ATP hydrolysis with the unwinding of duplex DNA at the replication fork by translocating in the 5'-3' direction. This creates two antiparallel DNA single strands (ssDNA). The leading ssDNA polymer is the template for DNA polymerase III holoenzyme which synthesizes a continuous strand.. The enzyme catalyses ATP + H2O = ADP + phosphate + H(+). Its function is as follows. DNA-dependent ATPase and 5'-3' DNA helicase required for the maintenance of mitochondrial (kinetoplast) genome stability. The protein is ATP-dependent DNA helicase PIF4 of Trypanosoma brucei brucei (strain 927/4 GUTat10.1).